Here is a 275-residue protein sequence, read N- to C-terminus: Homeobox protein Hox-C12a (275 aa).

Disordered regions lie at residues 101 to 129 and 148 to 213; these read SRENCSGGGSLKREDRARDTSALTSDHGM and QLTQ…KRKP. Over residues 155 to 177 the composition is skewed to low complexity; that stretch reads SCQSMESDSSSSLLNEASKPSSS. Polar residues predominate over residues 178-194; sequence DTQTLVSPGSHTGTITA. The homeobox DNA-binding region spans 207-266; sequence TRKKRKPYSKLQLAELEGEFMMNEFITRQRRRELSDRLNLSDQQVKIWFQNRRMKKKRLM.

This sequence belongs to the Abd-B homeobox family.

It is found in the nucleus. In terms of biological role, sequence-specific transcription factor which is part of a developmental regulatory system that provides cells with specific positional identities on the anterior-posterior axis. The protein is Homeobox protein Hox-C12a (hoxc12a) of Takifugu rubripes (Japanese pufferfish).